Consider the following 161-residue polypeptide: Ubiquitin D (161 aa).

Ubiquitin-like domains are found at residues 3 to 77 and 86 to 159; these read SCVC…LKVV and LSLV…AHCI.

Belongs to the ubiquitin D family. Interacts directly with the 26S proteasome. Interacts with NUB1; this interaction facilitates the linking of UBD-conjugated target protein to the proteasome complex and accelerates its own degradation and that of its conjugates. Interacts (via ubiquitin-like 1 domain) with the spindle checkpoint protein MAD2L1 during mitosis. Present in aggresomes of proteasome inhibited cells. Interacts with HDAC6 under proteasome impairment conditions. Forms a thioester with UBA6 in cells stimulated with tumor necrosis factor-alpha (TNFa) and interferon-gamma (IFNg). Interacts with SQSTM1 and TP53/p53. Can be acetylated.

The protein localises to the nucleus. It localises to the cytoplasm. Functionally, ubiquitin-like protein modifier which can be covalently attached to target proteins and subsequently leads to their degradation by the 26S proteasome, in a NUB1-dependent manner. Conjugation to the target protein is activated by UBA6 via adenylation of its C-terminal glycine. Probably functions as a survival factor. Promotes the expression of the proteasome subunit beta type-9 (PSMB9/LMP2). Regulates TNF-alpha-induced and LPS-mediated activation of the central mediator of innate immunity NF-kappa-B by promoting TNF-alpha-mediated proteasomal degradation of ubiquitinated-I-kappa-B-alpha. Required for TNF-alpha-induced p65 nuclear translocation in renal tubular epithelial cells (RTECs). May be involved in dendritic cell (DC) maturation, the process by which immature dendritic cells differentiate into fully competent antigen-presenting cells that initiate T-cell responses. Mediates mitotic non-disjunction and chromosome instability, in long-term in vitro culture and cancers, by abbreviating mitotic phase and impairing the kinetochore localization of MAD2L1 during the prometaphase stage of the cell cycle. May be involved in the formation of aggresomes when proteasome is saturated or impaired. Mediates apoptosis in a caspase-dependent manner, especially in renal epithelium and tubular cells during renal diseases. The protein is Ubiquitin D (Ubd) of Rattus norvegicus (Rat).